A 288-amino-acid chain; its full sequence is Acidic endochitinase SP2 (288 aa).

The N-terminal stretch at 1-27 (MTLLLKNTLYLALIISVISSFPTSLFA) is a signal peptide. A Pyrrolidone carboxylic acid modification is found at glutamine 28. The Chitin-binding type-1 domain occupies 28 to 63 (QNCGCAPNLCCSNFGFCGTGTPYCGVGNCQSGPCEG). Intrachain disulfides connect cysteine 30-cysteine 38, cysteine 32-cysteine 44, cysteine 37-cysteine 51, and cysteine 56-cysteine 61. Over residues 64 to 78 (GTPTTPTTPTTPTTP) the composition is skewed to low complexity. The interval 64–84 (GTPTTPTTPTTPTTPGTGGGG) is disordered. Positions 64 to 85 (GTPTTPTTPTTPTTPGTGGGGS) are hinge region (Gly/Pro/Thr-rich). 4 positions are modified to 4-hydroxyproline: proline 66, proline 69, proline 72, and proline 75. Repeat copies occupy residues 67 to 69 (TTP), 70 to 72 (TTP), 73 to 75 (TTP), and 76 to 78 (TTP). The tract at residues 67–78 (TTPTTPTTPTTP) is 4 X 3 AA tandem repeats of T-T-P. A catalytic region spans residues 86–288 (SVSDIVSQAF…GVAPGDNLTC (203 aa)). Disulfide bonds link cysteine 107–cysteine 154, cysteine 168–cysteine 178, and cysteine 256–cysteine 288. Catalysis depends on glutamate 149, which acts as the Proton donor.

It belongs to the glycosyl hydrolase 19 family. Chitinase class I subfamily. Post-translationally, O-glycosylated on hydroxyprolines; contains xylose. In terms of tissue distribution, localized to infected area.

Its subcellular location is the secreted. The protein resides in the extracellular space. It catalyses the reaction Random endo-hydrolysis of N-acetyl-beta-D-glucosaminide (1-&gt;4)-beta-linkages in chitin and chitodextrins.. Functionally, defense against chitin-containing fungal pathogens. This chain is Acidic endochitinase SP2 (SP2), found in Beta vulgaris (Sugar beet).